The chain runs to 100 residues: NADH-quinone oxidoreductase subunit K 2 (100 aa).

3 helical membrane passes run 4-24 (LHSY…GVLI), 29-49 (IVIF…FIAL), and 60-80 (IFVF…LALM).

Belongs to the complex I subunit 4L family. As to quaternary structure, NDH-1 is composed of 14 different subunits. Subunits NuoA, H, J, K, L, M, N constitute the membrane sector of the complex.

The protein localises to the cell inner membrane. It carries out the reaction a quinone + NADH + 5 H(+)(in) = a quinol + NAD(+) + 4 H(+)(out). In terms of biological role, NDH-1 shuttles electrons from NADH, via FMN and iron-sulfur (Fe-S) centers, to quinones in the respiratory chain. The immediate electron acceptor for the enzyme in this species is believed to be ubiquinone. Couples the redox reaction to proton translocation (for every two electrons transferred, four hydrogen ions are translocated across the cytoplasmic membrane), and thus conserves the redox energy in a proton gradient. This Geobacter metallireducens (strain ATCC 53774 / DSM 7210 / GS-15) protein is NADH-quinone oxidoreductase subunit K 2.